The sequence spans 202 residues: Putative pituitary tumor-transforming gene 3 protein (202 aa).

A D-box motif is present at residues 61-64; the sequence is RKAL. The short motif at 163 to 173 is the SH3-binding element; the sequence is PPSPLKMPSPP.

This sequence belongs to the securin family.

The protein resides in the cytoplasm. It localises to the nucleus. The protein is Putative pituitary tumor-transforming gene 3 protein (PTTG3) of Pan troglodytes (Chimpanzee).